The sequence spans 793 residues: Alanine--tRNA ligase, mitochondrial (793 aa).

ATP is bound by residues Arg-88, Trp-187, and 224–226; that span reads IWN. L-alanine contacts are provided by Asn-226 and Asp-249. Gly-253 is a binding site for ATP. 4 residues coordinate Zn(2+): His-594, His-598, Cys-706, and His-710.

It belongs to the class-II aminoacyl-tRNA synthetase family. Monomer. Requires Zn(2+) as cofactor.

The protein localises to the mitochondrion. The catalysed reaction is tRNA(Ala) + L-alanine + ATP = L-alanyl-tRNA(Ala) + AMP + diphosphate. Its function is as follows. Catalyzes the attachment of alanine to tRNA(Ala) in a two-step reaction: alanine is first activated by ATP to form Ala-AMP and then transferred to the acceptor end of tRNA(Ala). Also edits incorrectly charged tRNA(Ala) via its editing domain. The chain is Alanine--tRNA ligase, mitochondrial from Caenorhabditis elegans.